Consider the following 230-residue polypeptide: Cytochrome c-552 (230 aa).

The first 47 residues, 1-47, serve as a signal peptide directing secretion; the sequence is MTTYLSQDRLRNKENDTMTYQHSKMYQSRTFLLFSALLLVAGQASAA. The heme c site is built by cysteine 63, cysteine 66, histidine 67, cysteine 166, cysteine 169, and histidine 170.

Binds 2 heme c groups covalently per subunit.

It is found in the periplasm. Functionally, diheme, high potential cytochrome c. The chain is Cytochrome c-552 (cyc1) from Acidithiobacillus ferridurans.